Consider the following 320-residue polypeptide: L-lactate dehydrogenase 1 (320 aa).

Residues Val18, Asp39, Arg44, Tyr69, and 83–84 (GA) each bind NAD(+). Positions 86 and 92 each coordinate substrate. NAD(+) is bound by residues Ser105, 122 to 124 (AAN), and Ser147. 124–127 (NPVD) lines the substrate pocket. 152–155 (DSSR) provides a ligand contact to substrate. His179 serves as the catalytic Proton acceptor. Tyr223 is modified (phosphotyrosine). A substrate-binding site is contributed by Thr232.

The protein belongs to the LDH/MDH superfamily. LDH family. As to quaternary structure, homotetramer.

It is found in the cytoplasm. It carries out the reaction (S)-lactate + NAD(+) = pyruvate + NADH + H(+). Its pathway is fermentation; pyruvate fermentation to lactate; (S)-lactate from pyruvate: step 1/1. Its function is as follows. Catalyzes the conversion of lactate to pyruvate. The polypeptide is L-lactate dehydrogenase 1 (Lactiplantibacillus plantarum (strain ATCC BAA-793 / NCIMB 8826 / WCFS1) (Lactobacillus plantarum)).